The primary structure comprises 381 residues: Cytochrome b (381 aa).

The next 4 helical transmembrane spans lie at 33–53, 77–98, 113–133, and 178–198; these read FGSL…FLAM, WLIR…FLHV, WNIG…GYVL, and FFAF…VHLL. Heme b is bound by residues His-83 and His-97. Residues His-182 and His-196 each coordinate heme b. His-201 lines the a ubiquinone pocket. 4 consecutive transmembrane segments (helical) span residues 226 to 246, 288 to 308, 320 to 340, and 347 to 367; these read IKDA…ALFS, LGGV…PLLH, VSQT…WIGG, and FIII…VLMP.

This sequence belongs to the cytochrome b family. As to quaternary structure, the cytochrome bc1 complex contains 11 subunits: 3 respiratory subunits (MT-CYB, CYC1 and UQCRFS1), 2 core proteins (UQCRC1 and UQCRC2) and 6 low-molecular weight proteins (UQCRH/QCR6, UQCRB/QCR7, UQCRQ/QCR8, UQCR10/QCR9, UQCR11/QCR10 and a cleavage product of UQCRFS1). This cytochrome bc1 complex then forms a dimer. The cofactor is heme b.

Its subcellular location is the mitochondrion inner membrane. Component of the ubiquinol-cytochrome c reductase complex (complex III or cytochrome b-c1 complex) that is part of the mitochondrial respiratory chain. The b-c1 complex mediates electron transfer from ubiquinol to cytochrome c. Contributes to the generation of a proton gradient across the mitochondrial membrane that is then used for ATP synthesis. This chain is Cytochrome b (MT-CYB), found in Ningaui yvonnae (Southern ningaui).